A 361-amino-acid chain; its full sequence is Free fatty acid receptor 4 (361 aa).

The segment at 1-21 (MSPECAQTTGPGPSRTPDQVN) is disordered. At 1 to 45 (MSPECAQTTGPGPSRTPDQVNRTHFPFFSDVKGDHRLVLSVLETT) the chain is on the extracellular side. Residue N21 is glycosylated (N-linked (GlcNAc...) asparagine). A helical membrane pass occupies residues 46–66 (VLGLIFVVSLLGNVCALVLVV). At 67-77 (RRRRRGATVSL) the chain is on the cytoplasmic side. A helical membrane pass occupies residues 78-98 (VLNLFCADLLFTSAIPLVLVV). At 99 to 103 (RWTEA) the chain is on the extracellular side. A helical membrane pass occupies residues 104–124 (WLLGPVVCHLLFYVMTMSGSV). A disulfide bridge connects residues C111 and C194. The Cytoplasmic portion of the chain corresponds to 125–156 (TILTLAAVSLERMVCIVRLRRGLSGPGRRTQA). The helical transmembrane segment at 157–177 (ALLAFIWGYSALAALPLCILF) threads the bilayer. Over 178–204 (RVVPQRLPGGDQEIPICTLDWPNRIGE) the chain is Extracellular. The helical transmembrane segment at 205–225 (ISWDVFFVTLNFLVPGLVIVI) threads the bilayer. At 226–268 (SYSKILQITKASRKRLTLSLAYSESHQIRVSQQDYRLFRTLFL) the chain is on the cytoplasmic side. Residues 269–289 (LMVSFFIMWSPIIITILLILI) traverse the membrane as a helical segment. At 290–295 (QNFRQD) the chain is on the extracellular side. Residues 296–316 (LVIWPSLFFWVVAFTFANSAL) form a helical membrane-spanning segment. Over 317-361 (NPILYNMSLFRSEWRKIFCCFFFPEKGAIFTETSIRRNDLSVIST) the chain is Cytoplasmic. 2 positions are modified to phosphothreonine: T347 and T349. S350, S357, and S360 each carry phosphoserine.

Belongs to the G-protein coupled receptor 1 family. In terms of assembly, interacts (via C-terminus) with ARRB2 following LCFAs stimulation. In terms of processing, phosphorylated at two clusters of Ser and Thr residues located in the intracellular C-terminus. Prerequisite for FFAR4 internalization via an ARRB2-dependent pathway.

Its subcellular location is the cell membrane. The protein localises to the endosome membrane. It localises to the lysosome membrane. The protein resides in the cell projection. It is found in the cilium membrane. In terms of biological role, G-protein-coupled receptor for long-chain fatty acids (LCFAs) with a major role in adipogenesis, energy metabolism and inflammation. Signals via G-protein and beta-arrestin pathways. LCFAs sensing initiates activation of phosphoinositidase C-linked G proteins GNAQ and GNA11 (G(q)/G(11)), inducing a variety of cellular responses via second messenger pathways such as intracellular calcium mobilization, modulation of cyclic adenosine monophosphate (cAMP) production, and mitogen-activated protein kinases (MAPKs). After LCFAs binding, associates with beta-arrestin ARRB2 that acts as an adapter protein coupling the receptor to specific downstream signaling pathways, as well as mediating receptor endocytosis. In response to dietary fats, plays an important role in the regulation of adipocyte proliferation and differentiation. Acts as a receptor for omega-3 polyunsaturated fatty acids (PUFAs) at primary cilium of perivascular preadipocytes, initiating an adipogenic program via cAMP and CTCF-dependent chromatin remodeling that ultimately results in transcriptional activation of adipogenic genes and cell cycle entry. Induces differentiation of brown and beige adipocytes probably via autocrine and endocrine functions of FGF21 hormone. Contributes to the thermogenic activation of brown adipose tissue and the browning of white adipose tissue. Activates brown adipocytes by initiating intracellular calcium signaling leading to mitochondrial depolarization and fission, and overall increased mitochondrial respiration. Consequently stimulates fatty acid uptake and oxidation in mitochondria together with UCP1-mediated thermogenic respiration, eventually reducing fat mass. Regulates bi-potential differentiation of bone marrow mesenchymal stem cells toward osteoblasts or adipocytes likely by up-regulating distinct integrins. In response to dietary fats regulates hormone secretion and appetite. Stimulates GIP and GLP1 secretion from enteroendocrine cells as well as GCG secretion in pancreatic alpha cells, thereby playing a role in the regulation of blood glucose levels. Negatively regulates glucose-induced SST secretion in pancreatic delta cells. Mediates LCFAs inhibition of GHRL secretion, an appetite-controlling hormone. In taste buds, contributes to sensing of dietary fatty acids by the gustatory system. During the inflammatory response, promotes anti-inflammatory M2 macrophage differentiation in adipose tissue. Mediates the anti-inflammatory effects of omega-3 PUFAs via inhibition of NLRP3 inflammasome activation. In this pathway, interacts with adapter protein ARRB2 and inhibits the priming step triggered by Toll-like receptors (TLRs) at the level of TAK1 and TAB1. Further inhibits the activation step when ARRB2 directly associates with NLRP3, leading to inhibition of pro-inflammatory cytokine release. Mediates LCFAs anti-apoptotic effects. This chain is Free fatty acid receptor 4 (Ffar4), found in Rattus norvegicus (Rat).